Here is an 872-residue protein sequence, read N- to C-terminus: DNA mismatch repair protein MutS (872 aa).

Position 623 to 630 (623 to 630 (GPNMAGKS)) interacts with ATP.

The protein belongs to the DNA mismatch repair MutS family.

This protein is involved in the repair of mismatches in DNA. It is possible that it carries out the mismatch recognition step. This protein has a weak ATPase activity. In Trichlorobacter lovleyi (strain ATCC BAA-1151 / DSM 17278 / SZ) (Geobacter lovleyi), this protein is DNA mismatch repair protein MutS.